A 338-amino-acid polypeptide reads, in one-letter code: UDP-glucose 4-epimerase (338 aa).

Residues 11-12 (YI), 31-36 (DNLCNS), 58-59 (DI), 80-84 (FAGLK), Asn-99, Ser-124, Tyr-149, Lys-153, and Phe-178 each bind NAD(+). Substrate-binding residues include Ser-124 and Tyr-149. Tyr-149 (proton acceptor) is an active-site residue. Residues Asn-179, 199–200 (NL), 216–218 (AIF), Arg-231, 292–295 (REGD), and Tyr-299 each bind substrate.

This sequence belongs to the NAD(P)-dependent epimerase/dehydratase family. In terms of assembly, homodimer. Requires NAD(+) as cofactor.

It carries out the reaction UDP-alpha-D-glucose = UDP-alpha-D-galactose. The protein operates within carbohydrate metabolism; galactose metabolism. Functionally, involved in the metabolism of galactose. Catalyzes the conversion of UDP-galactose (UDP-Gal) to UDP-glucose (UDP-Glc) through a mechanism involving the transient reduction of NAD. In Yersinia pestis, this protein is UDP-glucose 4-epimerase (galE).